Here is a 758-residue protein sequence, read N- to C-terminus: Solute carrier family 26 member 6 (758 aa).

Residues 1-117 are Cytoplasmic-facing; the sequence is MGLPDGSDQG…PQGLAYALLA (117 aa). A helical membrane pass occupies residues 118–138; it reads GLPPMFGLYSSFYPVFIYFLF. Residues 139–187 are Extracellular-facing; that stretch reads GTSRHISVGTFAVMSVMVGSVTESLTADKAFVQGLNATADDARVQVAYT. An N-linked (GlcNAc) asparagine glycan is attached at Asn-174. A helical membrane pass occupies residues 188-208; that stretch reads LSFLVGLFQVGLGLVHFGFVV. Over 209-263 the chain is Cytoplasmic; it reads TYLSEPLVRSYTTAASVQVLVSQLKYVFGIKLSSHSGPLSVIYTVLEVCAQLPET. A helical transmembrane segment spans residues 264-284; the sequence is VPGTVVTAIVAGVALVLVKLL. Residues 285 to 292 are Extracellular-facing; the sequence is NEKLHRRL. Residues 293–313 traverse the membrane as a helical segment; sequence PLPIPGELLTLIGATGISYGV. The Cytoplasmic portion of the chain corresponds to 314–340; that stretch reads KLNDRFKVDVVGNITTGLIPPVAPKTE. Residues 341 to 361 form a helical membrane-spanning segment; sequence LFATLVGNAFAIAVVGFAIAI. Over 362 to 380 the chain is Extracellular; sequence SLGKIFALRHGYRVDSNQE. A helical transmembrane segment spans residues 381 to 401; it reads LVALGLSNLIGGFFQCFPVSC. Topologically, residues 402 to 417 are cytoplasmic; sequence SMSRSLVQESTGGNTQ. Residues 418 to 438 form a helical membrane-spanning segment; the sequence is VAGAVSSLFILLIIVKLGELF. Residues 439–485 lie on the Extracellular side of the membrane; that stretch reads RDLPKAVLAAVIIVNLKGMMKQFSDICSLWKANRVDLLIWLVTFVAT. A helical membrane pass occupies residues 486 to 506; it reads ILLNLDIGLAVSIVFSLLLVV. The Cytoplasmic portion of the chain corresponds to 507–758; sequence VRMQLPHYSV…PKSPVLATKL (252 aa). The STAS domain occupies 531 to 741; that stretch reads EYSGAKEVPG…ASVHDAVTFA (211 aa). The interval 585–608 is disordered; sequence EMKLKRMKKAKKSQKQDASSKISS. A Phosphoserine modification is found at Ser-751.

As to quaternary structure, interacts (via C-terminal domain) with PDZK1 (via C-terminal PDZ domain); the interaction induces chloride and oxalate exchange transport. Interacts with CFTR, SLC26A3 and NHERF1. Interacts with AHCYL1; the interaction increases SLC26A6 activity. N-glycosylated. Glycosylation at Asn-174 positively regulates its chloride oxalate exchanger activity. As to expression, expressed in kidney (at protein level). Expressed in spermatogenic cells. Expressed in intestine, kidney, testis, brain, muscle, heart, and stomach. Expressed in the submandibular and sublingual salivary glands. In terms of tissue distribution, highly expressed in stomach, kidney, heart and small intestine, low in the lung, liver, testis, brain, skeletal muscle and colon. Expressed in the heart.

It is found in the cell membrane. It localises to the apical cell membrane. The protein resides in the cytoplasmic vesicle membrane. Its subcellular location is the microsome. It carries out the reaction 2 hydrogencarbonate(in) + chloride(out) = 2 hydrogencarbonate(out) + chloride(in). It catalyses the reaction oxalate(in) + chloride(out) = oxalate(out) + chloride(in). The enzyme catalyses oxalate(in) + formate(out) = oxalate(out) + formate(in). The catalysed reaction is oxalate(in) + sulfate(out) = oxalate(out) + sulfate(in). It carries out the reaction formate(in) + chloride(out) = formate(out) + chloride(in). It catalyses the reaction sulfate(in) = sulfate(out). With respect to regulation, apical membrane chloride-bicarbonate exchange activity of the pancreatic duct is inhibited by 4,4'-diisothiocyanatostilbene-2,2'-disulfonic acid (DIDS). Oxalate secretion in the duodenum and chloride-formate exchange activity is inhibited by DIDS. Its activity is regulated as follows. Chloride-formate exchange activity and transcellular sulfate absorption is inhibited by 4,4'-diisothiocyanatostilbene-2,2'-disulfonic acid (DIDS). Apical membrane anion-exchanger with wide epithelial distribution that plays a role as a component of the pH buffering system for maintaining acid-base homeostasis. Acts as a versatile DIDS-sensitive inorganic and organic anion transporter that mediates the uptake of monovalent anions like chloride, bicarbonate, formate and hydroxyl ion and divalent anions like sulfate and oxalate. Functions in multiple exchange modes involving pairs of these anions, which include chloride-bicarbonate, chloride-oxalate, oxalate-formate, oxalate-sulfate and chloride-formate exchange. Apical membrane chloride-bicarbonate exchanger that mediates luminal chloride absorption and bicarbonate secretion by the small intestinal brush border membrane and contributes to intracellular pH regulation in the duodenal upper villous epithelium during proton-coupled peptide absorption, possibly by providing a bicarbonate import pathway. Its association with carbonic anhydrase CA2 forms a bicarbonate transport metabolon; hence maximizes the local concentration of bicarbonate at the transporter site. Also mediates intestinal chloride absorption and oxalate secretion, thereby preventing hyperoxaluria and calcium oxalate urolithiasis. Transepithelial oxalate secretion, chloride-formate, chloride-oxalate and chloride-bicarbonate transport activities in the duodenum are inhibited by PKC activation in a calcium-independent manner. The apical membrane chloride-bicarbonate exchanger also provides a major route for fluid and bicarbonate secretion into the proximal tubules of the kidney as well as into the proximal part of the interlobular pancreatic ductal tree, where it mediates electrogenic chloride-bicarbonate exchange with a chloride-bicarbonate stoichiometry of 1:2, and hence will dilute and alkalinize protein-rich acinar secretion. Also mediates the transcellular sulfate absorption and oxalate secretion across the apical membrane in the duodenum and the formate ion efflux at the apical brush border of cells in the proximal tubules of kidney. Plays a role in sperm capacitation by increasing intracellular pH. In terms of biological role, mediates electrogenic chloride-bicarbonate exchange with a chloride-bicarbonate stoichiometry of 1:2. Also mediates exchange of chloride-formate and chloride-oxalate ions. Mediates transcellular sulfate absorption. The protein is Solute carrier family 26 member 6 of Mus musculus (Mouse).